The following is an 899-amino-acid chain: Translation initiation factor IF-2 (899 aa).

Disordered regions lie at residues 116–135, 170–189, and 262–306; these read AKARAEQQAREAAEQKARLQ, RGGGTVKPAPKPAETLEQKK, and DREI…ANKH. One can recognise a tr-type G domain in the interval 399–568; it reads TRPPVVTIMG…LIQSELMELK (170 aa). A G1 region spans residues 408 to 415; sequence GHVDHGKT. 408-415 contacts GTP; sequence GHVDHGKT. Residues 433–437 form a G2 region; that stretch reads GITQH. The tract at residues 454–457 is G3; sequence DTPG. Residues 454-458 and 508-511 each bind GTP; these read DTPGH and NKMD. The G4 stretch occupies residues 508 to 511; the sequence is NKMD. Positions 544-546 are G5; that stretch reads SAH.

It belongs to the TRAFAC class translation factor GTPase superfamily. Classic translation factor GTPase family. IF-2 subfamily.

The protein resides in the cytoplasm. Functionally, one of the essential components for the initiation of protein synthesis. Protects formylmethionyl-tRNA from spontaneous hydrolysis and promotes its binding to the 30S ribosomal subunits. Also involved in the hydrolysis of GTP during the formation of the 70S ribosomal complex. This Acinetobacter baumannii (strain AB307-0294) protein is Translation initiation factor IF-2.